A 208-amino-acid chain; its full sequence is LexA repressor (208 aa).

A DNA-binding region (H-T-H motif) is located at residues 30 to 50; the sequence is VREICAAVGLSSTSTVHGHLS. Active-site for autocatalytic cleavage activity residues include Ser-129 and Lys-167.

Belongs to the peptidase S24 family. In terms of assembly, homodimer.

It catalyses the reaction Hydrolysis of Ala-|-Gly bond in repressor LexA.. Represses a number of genes involved in the response to DNA damage (SOS response), including recA and lexA. In the presence of single-stranded DNA, RecA interacts with LexA causing an autocatalytic cleavage which disrupts the DNA-binding part of LexA, leading to derepression of the SOS regulon and eventually DNA repair. This chain is LexA repressor, found in Lactobacillus acidophilus (strain ATCC 700396 / NCK56 / N2 / NCFM).